The sequence spans 1262 residues: Ras-specific guanine nucleotide-releasing factor 1 (1262 aa).

The region spanning 22–130 (DGTRKGYLSK…WVAAIARASY (109 aa)) is the PH 1 domain. S71 is modified (phosphoserine; by PLK2). The IQ domain occupies 208–233 (KKIKKVQSFLRGWLCRRKWKNIIQDY). In terms of domain architecture, DH spans 244 to 430 (KRNQVVFSML…EELSRIMHDE (187 aa)). The PH 2 domain maps to 460-588 (TFVRQGSLMQ…WTSDIIQCVD (129 aa)). Phosphoserine; by PLK2 occurs at positions 581 and 617. Positions 635–749 (KVLQIRYASV…RRRKLSLNIP (115 aa)) constitute an N-terminal Ras-GEF domain. The tract at residues 714 to 738 (DAPKSPRASRKFSSPPPLAIGTSSP) is disordered. Position 745 is a phosphoserine (S745). Residue S766 is modified to Phosphoserine; by PLK2. The segment at 800-854 (EEIDVPATIPEKPGELSASRKHSSDVLKEESEDDQNHSDEDNTEVSPVKSPPTPK) is disordered. Residues 821–839 (HSSDVLKEESEDDQNHSDE) are compositionally biased toward basic and acidic residues. Residues 1027–1259 (PALEIAEQLT…YESSLLIEPK (233 aa)) enclose the Ras-GEF domain.

In terms of assembly, homooligomer and heterooligomer with RASGRF2. Interacts with USP8, thereby regulating its stability. Phosphorylated by PLK2, leading to ubiquitination and degradation by the proteasome. In terms of processing, ubiquitinated and degraded following phosphorylation by PLK2. Post-translationally, phosphorylated by SRC and LCK. Phosphorylation by LCK increases its capacity to stimulate the GDP/GTP exchange on Ras, whereas its phosphorylation by SRC seems not to have an effect on stimulation activity. Brain.

Functionally, promotes the exchange of Ras-bound GDP by GTP. The polypeptide is Ras-specific guanine nucleotide-releasing factor 1 (Rasgrf1) (Mus musculus (Mouse)).